Reading from the N-terminus, the 334-residue chain is Anthranilate phosphoribosyltransferase (334 aa).

Residues Gly-79, 82–83 (GD), Ser-87, 89–92 (NIST), 107–115 (KHGNRSISS), and Ser-119 contribute to the 5-phospho-alpha-D-ribose 1-diphosphate site. Position 79 (Gly-79) interacts with anthranilate. Mg(2+) is bound at residue Ser-91. Residue Asn-110 coordinates anthranilate. Arg-165 contacts anthranilate. Mg(2+)-binding residues include Asp-224 and Glu-225.

The protein belongs to the anthranilate phosphoribosyltransferase family. In terms of assembly, homodimer. It depends on Mg(2+) as a cofactor.

It catalyses the reaction N-(5-phospho-beta-D-ribosyl)anthranilate + diphosphate = 5-phospho-alpha-D-ribose 1-diphosphate + anthranilate. It participates in amino-acid biosynthesis; L-tryptophan biosynthesis; L-tryptophan from chorismate: step 2/5. Catalyzes the transfer of the phosphoribosyl group of 5-phosphorylribose-1-pyrophosphate (PRPP) to anthranilate to yield N-(5'-phosphoribosyl)-anthranilate (PRA). The sequence is that of Anthranilate phosphoribosyltransferase from Streptococcus pneumoniae (strain 70585).